A 123-amino-acid chain; its full sequence is MATFGAGCFWGVEETFRQVPGVIDTAVGYMGGTTENPTYEEVCTDKTGHAEVVQVEYDPEQVSYEELLNVFWDNHNPTTLNRQGPDVGTNIARLFFTTLKSKEIPQKNPKRKWIKAGVGKIRL.

Cys-8 is a catalytic residue.

This sequence belongs to the MsrA Met sulfoxide reductase family.

It catalyses the reaction L-methionyl-[protein] + [thioredoxin]-disulfide + H2O = L-methionyl-(S)-S-oxide-[protein] + [thioredoxin]-dithiol. The catalysed reaction is [thioredoxin]-disulfide + L-methionine + H2O = L-methionine (S)-S-oxide + [thioredoxin]-dithiol. Its function is as follows. Has an important function as a repair enzyme for proteins that have been inactivated by oxidation. Catalyzes the reversible oxidation-reduction of methionine sulfoxide in proteins to methionine. In Thermoactinomyces vulgaris, this protein is Peptide methionine sulfoxide reductase MsrA.